Here is a 116-residue protein sequence, read N- to C-terminus: MKLEILESFENKYPNRDYTIEIVNPEFTSVCPITGLPDFGTITIRYVPNQRCVELKSLKYYFFEFRNAGIFYENITNKVLDDMVALLEPRSISVITEWKARGGITETVSVHYTSQS.

Cysteine 31 (thioimide intermediate) is an active-site residue. Aspartate 38 acts as the Proton donor in catalysis. Substrate-binding positions include 53–55 (VEL) and 72–73 (YE).

Belongs to the GTP cyclohydrolase I family. QueF type 1 subfamily.

It is found in the cytoplasm. It carries out the reaction 7-aminomethyl-7-carbaguanine + 2 NADP(+) = 7-cyano-7-deazaguanine + 2 NADPH + 3 H(+). The protein operates within tRNA modification; tRNA-queuosine biosynthesis. Catalyzes the NADPH-dependent reduction of 7-cyano-7-deazaguanine (preQ0) to 7-aminomethyl-7-deazaguanine (preQ1). The sequence is that of NADPH-dependent 7-cyano-7-deazaguanine reductase from Chlorobium chlorochromatii (strain CaD3).